Here is a 174-residue protein sequence, read N- to C-terminus: Pediocin PA-1 biosynthesis protein PedC (174 aa).

Its function is as follows. Probably involved in pediocin PA-1 biosynthesis. This chain is Pediocin PA-1 biosynthesis protein PedC (pedC), found in Pediococcus acidilactici.